We begin with the raw amino-acid sequence, 641 residues long: Macrolide export ATP-binding/permease protein MacB (641 aa).

In terms of domain architecture, ABC transporter spans 2–240 (IKLENIKKSF…LKQNLKEIKP (239 aa)). 38 to 45 (GQSGSGKS) is an ATP binding site. 4 helical membrane passes run 268–288 (FLTM…VALA), 516–536 (LLIS…VMNI), 565–585 (FLIE…GLAY), and 601–621 (IFST…GIVF).

The protein belongs to the ABC transporter superfamily. Macrolide exporter (TC 3.A.1.122) family. As to quaternary structure, homodimer.

It localises to the cell inner membrane. Its function is as follows. Non-canonical ABC transporter that contains transmembrane domains (TMD), which form a pore in the inner membrane, and an ATP-binding domain (NBD), which is responsible for energy generation. Confers resistance against macrolides. This is Macrolide export ATP-binding/permease protein MacB from Campylobacter fetus subsp. fetus (strain 82-40).